Reading from the N-terminus, the 431-residue chain is Enolase (431 aa).

Residue Gln168 participates in (2R)-2-phosphoglycerate binding. Glu210 acts as the Proton donor in catalysis. Mg(2+)-binding residues include Asp247, Glu291, and Asp318. (2R)-2-phosphoglycerate-binding residues include Lys343, Arg372, Ser373, and Lys394. The active-site Proton acceptor is the Lys343.

Belongs to the enolase family. Component of the RNA degradosome, a multiprotein complex involved in RNA processing and mRNA degradation. Mg(2+) serves as cofactor.

Its subcellular location is the cytoplasm. It localises to the secreted. The protein resides in the cell surface. The catalysed reaction is (2R)-2-phosphoglycerate = phosphoenolpyruvate + H2O. Its pathway is carbohydrate degradation; glycolysis; pyruvate from D-glyceraldehyde 3-phosphate: step 4/5. Catalyzes the reversible conversion of 2-phosphoglycerate (2-PG) into phosphoenolpyruvate (PEP). It is essential for the degradation of carbohydrates via glycolysis. The chain is Enolase from Acinetobacter baylyi (strain ATCC 33305 / BD413 / ADP1).